The sequence spans 65 residues: Large ribosomal subunit protein bL35 (65 aa).

This sequence belongs to the bacterial ribosomal protein bL35 family.

The chain is Large ribosomal subunit protein bL35 from Thiobacillus denitrificans (strain ATCC 25259 / T1).